The chain runs to 221 residues: Epididymal secretory glutathione peroxidase (221 aa).

The first 21 residues, 1–21, serve as a signal peptide directing secretion; sequence MVTELRVFYLVPLLLASYVQT. Residue Cys-73 is part of the active site.

The protein belongs to the glutathione peroxidase family. In terms of tissue distribution, epididymis.

It localises to the secreted. The enzyme catalyses 2 glutathione + H2O2 = glutathione disulfide + 2 H2O. Protects cells and enzymes from oxidative damage, by catalyzing the reduction of hydrogen peroxide, lipid peroxides and organic hydroperoxide, by glutathione. May constitute a glutathione peroxidase-like protective system against peroxide damage in sperm membrane lipids. The protein is Epididymal secretory glutathione peroxidase (Gpx5) of Mus musculus (Mouse).